Consider the following 429-residue polypeptide: MMNKIVLDENEIPKKWYNINPDLPSPLPEPKNPEGGKNIENLPRVFSRGVLEQEMSMERWIKIPREVMDVYKMIGRPTPLFRAKGLEEMLDTPARIYYKREDYSPTGSHKLNTAIAQAYYARKDGAERLTTETGAGQWGTALSLACSLMDLQCKVYMVRVSFNQKPFRKTIMQLYGGEVVPSPSNHTEFGRRMLKEDPEHPGSLGIAISEAMEEALQEENVYYSLGSVLNHVLLHQTVIGLETKKQLEIAGETPDIMIGCVGGGSNFGGAIFPFVKDKLDGKLDCEFIAAEPKSCPTLTAGEYRYDFGDTAGMTPLLKMYTLGHDFVPPSVHAGGLRYHGMSPQVALLVREGVINARAVPQHTIFESGVKFAKAEGVVPAPETCHAISVAIDEARKCRETGEEKTIVISFSGHGLLDLKGYGDYLEGKI.

Positions 18-40 (NINPDLPSPLPEPKNPEGGKNIE) are disordered. Lys110 bears the N6-(pyridoxal phosphate)lysine mark.

Belongs to the TrpB family. Tetramer of two alpha and two beta chains. Pyridoxal 5'-phosphate is required as a cofactor.

The enzyme catalyses (1S,2R)-1-C-(indol-3-yl)glycerol 3-phosphate + L-serine = D-glyceraldehyde 3-phosphate + L-tryptophan + H2O. It participates in amino-acid biosynthesis; L-tryptophan biosynthesis; L-tryptophan from chorismate: step 5/5. Its function is as follows. The beta subunit is responsible for the synthesis of L-tryptophan from indole and L-serine. The polypeptide is Tryptophan synthase beta chain 2 (trpB2) (Methanothermobacter thermautotrophicus (strain ATCC 29096 / DSM 1053 / JCM 10044 / NBRC 100330 / Delta H) (Methanobacterium thermoautotrophicum)).